Reading from the N-terminus, the 270-residue chain is Undecaprenyl-diphosphatase 1 (270 aa).

A run of 7 helical transmembrane segments spans residues 5–25, 42–62, 89–109, 117–137, 192–212, 220–240, and 250–270; these read YYIL…PIPI, IEGF…VLLI, FFFI…GVLF, LKGV…LWII, FSFL…ITDI, TLFV…YISL, and GNLK…LIFL.

Belongs to the UppP family.

It is found in the cell membrane. The catalysed reaction is di-trans,octa-cis-undecaprenyl diphosphate + H2O = di-trans,octa-cis-undecaprenyl phosphate + phosphate + H(+). Catalyzes the dephosphorylation of undecaprenyl diphosphate (UPP). Confers resistance to bacitracin. The sequence is that of Undecaprenyl-diphosphatase 1 from Bacillus cereus (strain ATCC 10987 / NRS 248).